We begin with the raw amino-acid sequence, 485 residues long: Cysteine--tRNA ligase (485 aa).

Cys-27 is a binding site for Zn(2+). Positions 29–39 match the 'HIGH' region motif; it reads ITAYDLCHIGH. Zn(2+)-binding residues include Cys-208, His-233, and Glu-237. The short motif at 265–269 is the 'KMSKS' region element; the sequence is KMSKS. Lys-268 provides a ligand contact to ATP.

Belongs to the class-I aminoacyl-tRNA synthetase family. Monomer. It depends on Zn(2+) as a cofactor.

It localises to the cytoplasm. It catalyses the reaction tRNA(Cys) + L-cysteine + ATP = L-cysteinyl-tRNA(Cys) + AMP + diphosphate. In Nitratidesulfovibrio vulgaris (strain ATCC 29579 / DSM 644 / CCUG 34227 / NCIMB 8303 / VKM B-1760 / Hildenborough) (Desulfovibrio vulgaris), this protein is Cysteine--tRNA ligase.